The following is a 235-amino-acid chain: Sugar fermentation stimulation protein homolog (235 aa).

This sequence belongs to the SfsA family.

The sequence is that of Sugar fermentation stimulation protein homolog from Alkaliphilus oremlandii (strain OhILAs) (Clostridium oremlandii (strain OhILAs)).